Here is a 185-residue protein sequence, read N- to C-terminus: Ribosome-recycling factor (185 aa).

This sequence belongs to the RRF family.

Its subcellular location is the cytoplasm. Its function is as follows. Responsible for the release of ribosomes from messenger RNA at the termination of protein biosynthesis. May increase the efficiency of translation by recycling ribosomes from one round of translation to another. The sequence is that of Ribosome-recycling factor from Shewanella frigidimarina (strain NCIMB 400).